Consider the following 877-residue polypeptide: Leucine--tRNA ligase (877 aa).

The 'HIGH' region motif lies at 43 to 53 (PYPSGRIHMGH). Residues 628–632 (KMSKS) carry the 'KMSKS' region motif. Residue Lys631 participates in ATP binding.

It belongs to the class-I aminoacyl-tRNA synthetase family.

It localises to the cytoplasm. It carries out the reaction tRNA(Leu) + L-leucine + ATP = L-leucyl-tRNA(Leu) + AMP + diphosphate. The polypeptide is Leucine--tRNA ligase (Brucella canis (strain ATCC 23365 / NCTC 10854 / RM-666)).